Here is a 36-residue protein sequence, read N- to C-terminus: Probable non-specific lipid-transfer protein (36 aa).

It belongs to the plant LTP family. Post-translationally, phosphorylated by Ca(2+)-dependent protein kinase.

Plant non-specific lipid-transfer proteins transfer phospholipids as well as galactolipids across membranes. May play a role in wax or cutin deposition in the cell walls of expanding epidermal cells and certain secretory tissues. The chain is Probable non-specific lipid-transfer protein from Pinus pinea (Italian stone pine).